Consider the following 426-residue polypeptide: Enolase (426 aa).

Gln-163 lines the (2R)-2-phosphoglycerate pocket. Residue Glu-205 is the Proton donor of the active site. Mg(2+) contacts are provided by Asp-242, Glu-285, and Asp-312. (2R)-2-phosphoglycerate is bound by residues Lys-337, Arg-366, Ser-367, and Lys-388. Lys-337 serves as the catalytic Proton acceptor.

It belongs to the enolase family. Component of the RNA degradosome, a multiprotein complex involved in RNA processing and mRNA degradation. Mg(2+) is required as a cofactor.

The protein localises to the cytoplasm. It localises to the secreted. The protein resides in the cell surface. It catalyses the reaction (2R)-2-phosphoglycerate = phosphoenolpyruvate + H2O. Its pathway is carbohydrate degradation; glycolysis; pyruvate from D-glyceraldehyde 3-phosphate: step 4/5. In terms of biological role, catalyzes the reversible conversion of 2-phosphoglycerate (2-PG) into phosphoenolpyruvate (PEP). It is essential for the degradation of carbohydrates via glycolysis. The protein is Enolase of Nitrosococcus oceani (strain ATCC 19707 / BCRC 17464 / JCM 30415 / NCIMB 11848 / C-107).